Reading from the N-terminus, the 285-residue chain is Foldase protein PrsA 2 (285 aa).

An N-terminal signal peptide occupies residues 1–20 (MRGKHIFIITALISILMLAA). Cys-21 carries N-palmitoyl cysteine lipidation. Cys-21 carries S-diacylglycerol cysteine lipidation. A PpiC domain is found at 134–224 (KPEIKASHIL…NGYHIIKLTG (91 aa)).

Belongs to the PrsA family.

It localises to the cell membrane. The catalysed reaction is [protein]-peptidylproline (omega=180) = [protein]-peptidylproline (omega=0). Functionally, plays a major role in protein secretion by helping the post-translocational extracellular folding of several secreted proteins. Important for the secretion of the protective antigen. The three PsrA proteins in this organism show different but overlapping substrate specificities. In Bacillus anthracis, this protein is Foldase protein PrsA 2 (prsA2).